The chain runs to 202 residues: Imidazole glycerol phosphate synthase subunit HisH (202 aa).

The Glutamine amidotransferase type-1 domain maps to 3–202 (RIVIIDYGLG…KILKNFVEMC (200 aa)). The active-site Nucleophile is the Cys-79. Residues His-183 and Glu-185 contribute to the active site.

In terms of assembly, heterodimer of HisH and HisF.

Its subcellular location is the cytoplasm. The catalysed reaction is 5-[(5-phospho-1-deoxy-D-ribulos-1-ylimino)methylamino]-1-(5-phospho-beta-D-ribosyl)imidazole-4-carboxamide + L-glutamine = D-erythro-1-(imidazol-4-yl)glycerol 3-phosphate + 5-amino-1-(5-phospho-beta-D-ribosyl)imidazole-4-carboxamide + L-glutamate + H(+). The enzyme catalyses L-glutamine + H2O = L-glutamate + NH4(+). It participates in amino-acid biosynthesis; L-histidine biosynthesis; L-histidine from 5-phospho-alpha-D-ribose 1-diphosphate: step 5/9. In terms of biological role, IGPS catalyzes the conversion of PRFAR and glutamine to IGP, AICAR and glutamate. The HisH subunit catalyzes the hydrolysis of glutamine to glutamate and ammonia as part of the synthesis of IGP and AICAR. The resulting ammonia molecule is channeled to the active site of HisF. This chain is Imidazole glycerol phosphate synthase subunit HisH, found in Methanosarcina acetivorans (strain ATCC 35395 / DSM 2834 / JCM 12185 / C2A).